A 153-amino-acid polypeptide reads, in one-letter code: Arginine repressor (153 aa).

It belongs to the ArgR family.

Its subcellular location is the cytoplasm. Its pathway is amino-acid biosynthesis; L-arginine biosynthesis [regulation]. In terms of biological role, regulates arginine biosynthesis genes. In Actinobacillus pleuropneumoniae serotype 7 (strain AP76), this protein is Arginine repressor.